The chain runs to 316 residues: Annexin D7 (316 aa).

Residue Ala-2 is modified to N-acetylalanine. Annexin repeat units lie at residues 11–82 (PLPE…LWTF), 83–154 (EPAE…PLVS), 166–237 (TLAR…AVIK), and 241–312 (YPEK…ALLG). The Ca(2+) site is built by Phe-24, Gly-26, Gly-28, and Glu-68. Ser-95 is subject to Phosphoserine. Phosphothreonine is present on residues Thr-100 and Thr-112. Residue Tyr-129 is modified to Phosphotyrosine. Residues Ile-254 and Gly-258 each contribute to the Ca(2+) site. A Phosphotyrosine modification is found at Tyr-283. Phosphoserine is present on Ser-288. Residues Asp-298, Thr-299, and Glu-304 each coordinate Ca(2+).

The protein belongs to the annexin (TC 1.A.31.1) family. In terms of tissue distribution, expressed in flowers.

In Arabidopsis thaliana (Mouse-ear cress), this protein is Annexin D7 (ANNAT7).